The primary structure comprises 472 residues: Tryptophanase (472 aa).

Lysine 270 carries the N6-(pyridoxal phosphate)lysine modification.

The protein belongs to the beta-eliminating lyase family. In terms of assembly, homotetramer. Pyridoxal 5'-phosphate serves as cofactor.

It carries out the reaction L-tryptophan + H2O = indole + pyruvate + NH4(+). Its pathway is amino-acid degradation; L-tryptophan degradation via pyruvate pathway; indole and pyruvate from L-tryptophan: step 1/1. The sequence is that of Tryptophanase from Haemophilus influenzae (strain 86-028NP).